Here is a 192-residue protein sequence, read N- to C-terminus: Adenylate kinase (192 aa).

Residue 10 to 18 coordinates ATP; the sequence is GVPGVGKTT.

This sequence belongs to the archaeal adenylate kinase family.

The protein resides in the cytoplasm. The catalysed reaction is AMP + ATP = 2 ADP. The chain is Adenylate kinase from Methanoculleus marisnigri (strain ATCC 35101 / DSM 1498 / JR1).